The sequence spans 259 residues: Cytochrome c oxidase subunit 3 (259 aa).

Helical transmembrane passes span 13–33 (PWPL…TSWF), 36–56 (HGFI…FQWW), 80–100 (GMVL…WAYF), 125–145 (FQIP…VTWA), 154–174 (HAEA…FTLL), 195–215 (FFVA…FLLI), and 237–257 (AWYW…IYWW).

This sequence belongs to the cytochrome c oxidase subunit 3 family. In terms of assembly, component of the cytochrome c oxidase (complex IV, CIV), a multisubunit enzyme composed of a catalytic core of 3 subunits and several supernumerary subunits. The complex exists as a monomer or a dimer and forms supercomplexes (SCs) in the inner mitochondrial membrane with ubiquinol-cytochrome c oxidoreductase (cytochrome b-c1 complex, complex III, CIII).

It is found in the mitochondrion inner membrane. It carries out the reaction 4 Fe(II)-[cytochrome c] + O2 + 8 H(+)(in) = 4 Fe(III)-[cytochrome c] + 2 H2O + 4 H(+)(out). Its function is as follows. Component of the cytochrome c oxidase, the last enzyme in the mitochondrial electron transport chain which drives oxidative phosphorylation. The respiratory chain contains 3 multisubunit complexes succinate dehydrogenase (complex II, CII), ubiquinol-cytochrome c oxidoreductase (cytochrome b-c1 complex, complex III, CIII) and cytochrome c oxidase (complex IV, CIV), that cooperate to transfer electrons derived from NADH and succinate to molecular oxygen, creating an electrochemical gradient over the inner membrane that drives transmembrane transport and the ATP synthase. Cytochrome c oxidase is the component of the respiratory chain that catalyzes the reduction of oxygen to water. Electrons originating from reduced cytochrome c in the intermembrane space (IMS) are transferred via the dinuclear copper A center (CU(A)) of subunit 2 and heme A of subunit 1 to the active site in subunit 1, a binuclear center (BNC) formed by heme A3 and copper B (CU(B)). The BNC reduces molecular oxygen to 2 water molecules using 4 electrons from cytochrome c in the IMS and 4 protons from the mitochondrial matrix. This Heterololigo bleekeri (Spear squid) protein is Cytochrome c oxidase subunit 3 (COIII).